Here is a 307-residue protein sequence, read N- to C-terminus: Solute carrier family 25 member 53 (307 aa).

Positions 1-23 (MGEQNHSPGKELQHRTRAEAPGK) are disordered. Over residues 8 to 22 (PGKELQHRTRAEAPG) the composition is skewed to basic and acidic residues. Solcar repeat units lie at residues 25 to 105 (SWHS…LLCF), 112 to 202 (HTLG…IQDG), and 210 to 302 (HWVP…HSRK). The next 6 membrane-spanning stretches (helical) occupy residues 31–51 (YALG…IYKV), 82–102 (YPPL…YDSL), 112–132 (HTLG…AVAL), 181–201 (VLAR…PIQD), 215–235 (LVSG…LIVL), and 269–290 (IYRG…TTAI).

It belongs to the mitochondrial carrier (TC 2.A.29) family.

Its subcellular location is the mitochondrion inner membrane. The chain is Solute carrier family 25 member 53 (SLC25A53) from Homo sapiens (Human).